The primary structure comprises 211 residues: Outer-membrane lipoprotein carrier protein (211 aa).

An N-terminal signal peptide occupies residues 1-24 (MNTIKILIGLLGIFLFSLSGIVSA).

Belongs to the LolA family. As to quaternary structure, monomer.

Its subcellular location is the periplasm. Its function is as follows. Participates in the translocation of lipoproteins from the inner membrane to the outer membrane. Only forms a complex with a lipoprotein if the residue after the N-terminal Cys is not an aspartate (The Asp acts as a targeting signal to indicate that the lipoprotein should stay in the inner membrane). The polypeptide is Outer-membrane lipoprotein carrier protein (Coxiella burnetii (strain RSA 331 / Henzerling II)).